Here is a 48-residue protein sequence, read N- to C-terminus: DNA-directed RNA polymerase subunit Rpo12 (48 aa).

Zn(2+)-binding residues include Cys9, Cys26, and Cys29.

Belongs to the archaeal Rpo12/eukaryotic RPC10 RNA polymerase subunit family. In terms of assembly, part of the RNA polymerase complex. The cofactor is Zn(2+).

It is found in the cytoplasm. The catalysed reaction is RNA(n) + a ribonucleoside 5'-triphosphate = RNA(n+1) + diphosphate. Functionally, DNA-dependent RNA polymerase (RNAP) catalyzes the transcription of DNA into RNA using the four ribonucleoside triphosphates as substrates. The sequence is that of DNA-directed RNA polymerase subunit Rpo12 from Sulfurisphaera tokodaii (strain DSM 16993 / JCM 10545 / NBRC 100140 / 7) (Sulfolobus tokodaii).